The chain runs to 61 residues: Small ribosomal subunit protein uS14 (61 aa).

Cys24, Cys27, Cys40, and Cys43 together coordinate Zn(2+).

This sequence belongs to the universal ribosomal protein uS14 family. Zinc-binding uS14 subfamily. Part of the 30S ribosomal subunit. Contacts proteins S3 and S10. Zn(2+) serves as cofactor.

Binds 16S rRNA, required for the assembly of 30S particles and may also be responsible for determining the conformation of the 16S rRNA at the A site. In Spiroplasma citri, this protein is Small ribosomal subunit protein uS14.